Consider the following 60-residue polypeptide: Large ribosomal subunit protein bL32 (60 aa).

The span at 1–16 shows a compositional bias: basic residues; sequence MAVPRNRHSNARKNIR. The segment at 1-20 is disordered; sequence MAVPRNRHSNARKNIRRSHD.

Belongs to the bacterial ribosomal protein bL32 family.

The protein is Large ribosomal subunit protein bL32 (rpmF) of Chlamydia pneumoniae (Chlamydophila pneumoniae).